Consider the following 388-residue polypeptide: Quinolone resistance protein NorA (388 aa).

12 helical membrane-spanning segments follow: residues I5–V25, L42–A62, L69–H89, V99–I119, F129–F149, M157–I177, W201–F221, D239–F259, L269–A289, W293–I313, L331–F351, and I355–I375.

The protein belongs to the major facilitator superfamily. TCR/Tet family.

It is found in the cell membrane. Its function is as follows. Involved in quinolone resistance. May constitute a membrane-associated active efflux pump of hydrophilic quinolones. The polypeptide is Quinolone resistance protein NorA (norA) (Staphylococcus aureus (strain COL)).